A 356-amino-acid chain; its full sequence is S-adenosylmethionine:tRNA ribosyltransferase-isomerase (356 aa).

It belongs to the QueA family. As to quaternary structure, monomer.

It is found in the cytoplasm. It carries out the reaction 7-aminomethyl-7-carbaguanosine(34) in tRNA + S-adenosyl-L-methionine = epoxyqueuosine(34) in tRNA + adenine + L-methionine + 2 H(+). It participates in tRNA modification; tRNA-queuosine biosynthesis. Its function is as follows. Transfers and isomerizes the ribose moiety from AdoMet to the 7-aminomethyl group of 7-deazaguanine (preQ1-tRNA) to give epoxyqueuosine (oQ-tRNA). This is S-adenosylmethionine:tRNA ribosyltransferase-isomerase from Chromohalobacter salexigens (strain ATCC BAA-138 / DSM 3043 / CIP 106854 / NCIMB 13768 / 1H11).